The following is a 275-amino-acid chain: NH(3)-dependent NAD(+) synthetase (275 aa).

46–53 (GISGGQDS) is an ATP binding site. Residue Asp-52 coordinates Mg(2+). Arg-140 provides a ligand contact to deamido-NAD(+). Thr-160 contributes to the ATP binding site. Mg(2+) is bound at residue Glu-165. Lys-173 and Asp-180 together coordinate deamido-NAD(+). Residues Lys-189 and Thr-211 each coordinate ATP. Residue 260–261 (HK) participates in deamido-NAD(+) binding.

It belongs to the NAD synthetase family. Homodimer.

The enzyme catalyses deamido-NAD(+) + NH4(+) + ATP = AMP + diphosphate + NAD(+) + H(+). It functions in the pathway cofactor biosynthesis; NAD(+) biosynthesis; NAD(+) from deamido-NAD(+) (ammonia route): step 1/1. Catalyzes the ATP-dependent amidation of deamido-NAD to form NAD. Uses ammonia as a nitrogen source. The polypeptide is NH(3)-dependent NAD(+) synthetase (Shigella boydii serotype 4 (strain Sb227)).